The following is a 237-amino-acid chain: Segregation and condensation protein A (237 aa).

It belongs to the ScpA family. Component of a cohesin-like complex composed of ScpA, ScpB and the Smc homodimer, in which ScpA and ScpB bind to the head domain of Smc. The presence of the three proteins is required for the association of the complex with DNA.

Its subcellular location is the cytoplasm. Participates in chromosomal partition during cell division. May act via the formation of a condensin-like complex containing Smc and ScpB that pull DNA away from mid-cell into both cell halves. This is Segregation and condensation protein A from Streptococcus thermophilus (strain ATCC BAA-250 / LMG 18311).